The chain runs to 801 residues: N,N'-diacetylchitobiose phosphorylase (801 aa).

Positions 333, 343, 349, 350, 490, and 492 each coordinate N-acetyl-alpha-D-glucosamine 1-phosphate. Catalysis depends on aspartate 492, which acts as the Proton donor. Positions 492, 636, and 637 each coordinate N-acetyl-D-glucosamine. N-acetyl-alpha-D-glucosamine 1-phosphate is bound by residues glutamate 637, histidine 644, glutamine 690, threonine 709, and glycine 710.

It belongs to the glycosyl hydrolase 94 family. Homodimer.

It catalyses the reaction N,N'-diacetylchitobiose + phosphate = N-acetyl-alpha-D-glucosamine 1-phosphate + N-acetyl-D-glucosamine. In terms of biological role, catalyzes the reversible phosphorolysis of chitobiose (N,N'-diacetylchitobiose or (GlcNAc)(2)) into N-acetyl-alpha-D-glucosamine 1-phosphate (GlcNAc-1-P) and N-acetyl-D-glucosamine (GlcNAc) with inversion of the anomeric configuration. In the synthetic reaction, is also active on glucose-1-phosphate with 10% activity as compared with that on GlcNAc-1-P. GlcNAc is the best acceptor substrate, but the enzyme can use aryl-beta-glycosides of GlcNAc as the acceptor substrate with 10-20% activities of GlcNAc. Shows no phosphorolytic activity on cellobiose. The protein is N,N'-diacetylchitobiose phosphorylase of Vibrio proteolyticus (Aeromonas proteolytica).